The following is a 273-amino-acid chain: MMKTLSSLLLLFSVSLQAAPIERVISLAPHATEIAYAAGLGDKLIAVSEMSDYPEAAKKLEKVSNYKGINLEKIITLKPDLIIAWPAGNPAKELEKLEQFGFKIYYSQTKSLKDIGDNIEQLSQYSDDPQIGLNNARDYRTHLEALRAKYQNLPKTRYFYQLSDTPIITVAGQNWPTEVFRFCGGENVFDGASAPYPQVSIEQVILKRPQAMFVSPHAIQNNGMWSPWVEEIPALKNAHFWQLDADWLNRPTPRTLLAIEQVCEHFASIEQKR.

Positions 1–18 are cleaved as a signal peptide; sequence MMKTLSSLLLLFSVSLQA. Residues 23 to 273 form the Fe/B12 periplasmic-binding domain; the sequence is RVISLAPHAT…EHFASIEQKR (251 aa). The cysteines at positions 183 and 263 are disulfide-linked.

This sequence belongs to the BtuF family. As to quaternary structure, the complex is composed of two ATP-binding proteins (BtuD), two transmembrane proteins (BtuC) and a solute-binding protein (BtuF).

Its subcellular location is the periplasm. In terms of biological role, part of the ABC transporter complex BtuCDF involved in vitamin B12 import. Binds vitamin B12 and delivers it to the periplasmic surface of BtuC. This Vibrio vulnificus (strain CMCP6) protein is Vitamin B12-binding protein.